A 296-amino-acid chain; its full sequence is Nitrogenase iron protein (296 aa).

Glycine 12–serine 19 contributes to the ATP binding site. A [4Fe-4S] cluster-binding site is contributed by cysteine 100. Residue arginine 103 is modified to ADP-ribosylarginine; by dinitrogenase reductase ADP-ribosyltransferase. Cysteine 134 provides a ligand contact to [4Fe-4S] cluster.

Belongs to the NifH/BchL/ChlL family. Homodimer. [4Fe-4S] cluster is required as a cofactor. Post-translationally, the reversible ADP-ribosylation of Arg-103 inactivates the nitrogenase reductase and regulates nitrogenase activity.

The enzyme catalyses N2 + 8 reduced [2Fe-2S]-[ferredoxin] + 16 ATP + 16 H2O = H2 + 8 oxidized [2Fe-2S]-[ferredoxin] + 2 NH4(+) + 16 ADP + 16 phosphate + 6 H(+). The key enzymatic reactions in nitrogen fixation are catalyzed by the nitrogenase complex, which has 2 components: the iron protein and the molybdenum-iron protein. The chain is Nitrogenase iron protein from Acidithiobacillus ferrooxidans (strain ATCC 23270 / DSM 14882 / CIP 104768 / NCIMB 8455) (Ferrobacillus ferrooxidans (strain ATCC 23270)).